Consider the following 108-residue polypeptide: CDGSH iron-sulfur domain-containing protein 1 (108 aa).

The helical; Signal-anchor for type III membrane protein transmembrane segment at 13 to 31 (WIAAVTFAAGTAALGYLAY) threads the bilayer. The Cytoplasmic portion of the chain corresponds to 32-108 (KKFYAKESRT…GPLIIKKKET (77 aa)). A Glycyl lysine isopeptide (Lys-Gly) (interchain with G-Cter in ubiquitin) cross-link involves residue Lys-42. The active-site Schiff-base intermediate with pyridoxal 5'-phosphate is Lys-55. Residues Lys-55 and Lys-68 each carry the N6-acetyllysine; alternate modification. Residues Lys-55 and Lys-68 each participate in a glycyl lysine isopeptide (Lys-Gly) (interchain with G-Cter in ubiquitin); alternate cross-link. Cys-72 and Cys-74 together coordinate [2Fe-2S] cluster. Residues Lys-78 and Lys-79 each participate in a glycyl lysine isopeptide (Lys-Gly) (interchain with G-Cter in ubiquitin) cross-link. The [2Fe-2S] cluster site is built by Cys-83 and His-87. Residue Lys-89 forms a Glycyl lysine isopeptide (Lys-Gly) (interchain with G-Cter in ubiquitin) linkage. Lys-104 is modified (N6-acetyllysine; alternate). Lys-104 is covalently cross-linked (Glycyl lysine isopeptide (Lys-Gly) (interchain with G-Cter in ubiquitin); alternate). Glycyl lysine isopeptide (Lys-Gly) (interchain with G-Cter in ubiquitin) cross-links involve residues Lys-105 and Lys-106.

This sequence belongs to the CISD protein family. As to quaternary structure, homodimer. It depends on [2Fe-2S] cluster as a cofactor. The cofactor is pyridoxal 5'-phosphate. Ubiquitinated by PRKN during mitophagy, leading to its degradation and enhancement of mitophagy. Deubiquitinated by USP30.

The protein localises to the mitochondrion outer membrane. The catalysed reaction is L-cysteine + 2-oxoglutarate = 2-oxo-3-sulfanylpropanoate + L-glutamate. L-cysteine transaminase that catalyzes the reversible transfer of the amino group from L-cysteine to the alpha-keto acid 2-oxoglutarate to respectively form 2-oxo-3-sulfanylpropanoate and L-glutamate. The catalytic cycle occurs in the presence of pyridoxal 5'-phosphate (PLP) cofactor that facilitates transamination by initially forming an internal aldimine with the epsilon-amino group of active site Lys-55 residue on the enzyme (PLP-enzyme aldimine), subsequently displaced by formation of an external aldimine with the substrate amino group (PLP-L-cysteine aldimine). The external aldimine is further deprotonated to form a carbanion intermediate, which in the presence of 2-oxoglutarate regenerates PLP yielding final products 2-oxo-3-sulfanylpropanoate and L-glutamate. The proton transfer in carbanion intermediate is suggested to be controlled by the active site lysine residue, whereas PLP stabilizes carbanion structure through electron delocalization, also known as the electron sink effect. Plays a key role in regulating maximal capacity for electron transport and oxidative phosphorylation. May be involved in iron-sulfur cluster shuttling and/or in redox reactions. Can transfer the [2Fe-2S] cluster to an apo-acceptor protein only when in the oxidation state, likely serving as a redox sensor that regulates mitochondrial iron-sulfur cluster assembly and iron trafficking upon oxidative stress. This is CDGSH iron-sulfur domain-containing protein 1 (Cisd1) from Rattus norvegicus (Rat).